The sequence spans 575 residues: Muellerian-inhibiting factor (575 aa).

A signal peptide spans 1-24 (MPGPSLSLALVLSAMGALLRPGTP). Residues 25 to 466 (REEVFSTSAL…ERSGSARAQR (442 aa)) constitute a propeptide that is removed on maturation. Asn-78 and Asn-344 each carry an N-linked (GlcNAc...) asparagine glycan. Disulfide bonds link Cys-477–Cys-541, Cys-503–Cys-572, and Cys-507–Cys-574.

The protein belongs to the TGF-beta family. Homodimer; disulfide-linked. Post-translationally, preproprotein is proteolytically processed to generate N- and C-terminal cleavage products that homodimerize and associate to form a biologically active non-covalent complex. Binding of the non-covalent complex to AMHR2 induces dissociation of the pro-region from the mature C-terminal dimer. The N-terminal portion of the protein, despite having no intrinsic activity, has the role of amplifying the activity of the C-terminus. Expressed in fetal testis and adult ovaries.

The protein resides in the secreted. Functionally, plays an important role in several reproductive functions. Induces Muellerian duct regression during male fetal sexual differentiation and plays a role in Leydig cell differentiation and function. In female acts as a negative regulator of the primordial to primary follicle transition and decreases FSH sensitivity of growing follicles. AMH signals by binding to a specific type-II receptor, AMHR2, that heterodimerizes with type-I receptors (ACVR1 and BMPR1A), and recruiting SMAD proteins that are translocated to the nucleus to regulate target gene expression. The chain is Muellerian-inhibiting factor (AMH) from Bos taurus (Bovine).